Here is a 319-residue protein sequence, read N- to C-terminus: MSGMQISSYLRKYLADEDKKIREEFKESDPNNEMILWMHEKTRITEEDLARPYTEDEVRELCLRTKVKVNMTAWNCLWEAKKRFDAKGRFERKSEEFINLMYLKAVRRKMVQPYPEDYVAQRREIAAAETKKDNISRLDRWQKQKRRNQSAHATQPDSQDNEVVEIHDDTNRYSVSQAVALPVLTPSDLSGIGDDEDEQQQQHHHHKHRSGFQNEHADCPETQMRCDQADSGRLPNGPTNSESDPDYYMFGTQLSRSIQPTSTQEADDQLACPETEMNESWVRCDQINSESMSIGPSINSDGSISFQNSGSEPIDVDVN.

The required for binding to Su(var)205 stretch occupies residues 107-312 (RRKMVQPYPE…SISFQNSGSE (206 aa)). Disordered stretches follow at residues 141-163 (WQKQ…DNEV) and 186-248 (PSDL…PDYY). 2 consecutive short sequence motifs (su(var)205-binding Pro-containing repeat) follow at residues 220 to 224 (PETQM) and 273 to 279 (PETEMNE). A compositionally biased stretch (polar residues) spans 291-311 (SMSIGPSINSDGSISFQNSGS). Residues 291-319 (SMSIGPSINSDGSISFQNSGSEPIDVDVN) are disordered.

In terms of assembly, interacts (via C-terminus) with Su(var)205 dimer (via hinge and chromoshadow domain) and with moi to form the terminin, telomere-capping, complex. Interacts with HP6, which is also part of the terminin complex.

It localises to the nucleus. The protein resides in the chromosome. Its subcellular location is the telomere. Functionally, binds to chromosome ends in a sequence-dependent manner and is required for telomere capping. This is Telomere-binding protein cav from Drosophila yakuba (Fruit fly).